We begin with the raw amino-acid sequence, 231 residues long: Ribonuclease 3 (231 aa).

In terms of domain architecture, RNase III spans 5 to 134 (QEKLKNDYGL…FLGALFIDQG (130 aa)). Position 47 (E47) interacts with Mg(2+). The active site involves D51. Positions 120 and 123 each coordinate Mg(2+). E123 is an active-site residue. The 70-residue stretch at 160–229 (DYKTELQEVL…AENAIKGQNH (70 aa)) folds into the DRBM domain.

It belongs to the ribonuclease III family. As to quaternary structure, homodimer. It depends on Mg(2+) as a cofactor.

The protein resides in the cytoplasm. It carries out the reaction Endonucleolytic cleavage to 5'-phosphomonoester.. Its function is as follows. Digests double-stranded RNA. Involved in the processing of primary rRNA transcript to yield the immediate precursors to the large and small rRNAs (23S and 16S). Processes some mRNAs, and tRNAs when they are encoded in the rRNA operon. Processes pre-crRNA and tracrRNA of type II CRISPR loci if present in the organism. In Lactococcus lactis subsp. cremoris (strain SK11), this protein is Ribonuclease 3.